The primary structure comprises 132 residues: Small ribosomal subunit protein uS9 (132 aa).

This sequence belongs to the universal ribosomal protein uS9 family.

This chain is Small ribosomal subunit protein uS9 (rpsI), found in Mycoplasma pneumoniae (strain ATCC 29342 / M129 / Subtype 1) (Mycoplasmoides pneumoniae).